Reading from the N-terminus, the 387-residue chain is DNA double-strand break repair protein Mre11 (387 aa).

Mn(2+) is bound by residues D11, H13, D52, and D87. The Proton donor role is filled by H88. Residues H159, H190, and H192 each coordinate Mn(2+).

This sequence belongs to the MRE11/RAD32 family. Homodimer. Forms a heterotetramer composed of two Mre11 subunits and two Rad50 subunits. Interacts with HerA. It depends on Mn(2+) as a cofactor.

Nuclease activity is regulated by Rad50. In terms of biological role, part of the Rad50/Mre11 complex, which is involved in the early steps of DNA double-strand break (DSB) repair. The complex may facilitate opening of the processed DNA ends to aid in the recruitment of HerA and NurA. Mre11 binds to DSB ends and has both double-stranded 3'-5' exonuclease activity and single-stranded endonuclease activity. The sequence is that of DNA double-strand break repair protein Mre11 from Sulfurisphaera tokodaii (strain DSM 16993 / JCM 10545 / NBRC 100140 / 7) (Sulfolobus tokodaii).